The sequence spans 159 residues: Large ribosomal subunit protein uL11 (159 aa).

Belongs to the universal ribosomal protein uL11 family. Part of the ribosomal stalk of the 50S ribosomal subunit. Interacts with L10 and the large rRNA to form the base of the stalk. L10 forms an elongated spine to which L12 dimers bind in a sequential fashion forming a multimeric L10(L12)X complex.

Functionally, forms part of the ribosomal stalk which helps the ribosome interact with GTP-bound translation factors. This chain is Large ribosomal subunit protein uL11, found in Methanococcus maripaludis (strain C6 / ATCC BAA-1332).